The chain runs to 568 residues: Sphingosine-1-phosphate lyase 1 (568 aa).

Topologically, residues 1–41 are lumenal; it reads MPSTDLLKLKDFEPYLEILEAYSTKAKNYVNGYCTKYEPWQ. A helical; Signal-anchor for type III membrane protein transmembrane segment spans residues 42–62; sequence LIAGSVLCTLLVVWVYELIFQ. Residues 63–568 lie on the Cytoplasmic side of the membrane; it reads PESLWSRFKN…NQMNGSPKPR (506 aa). Lys353 is modified (N6-(pyridoxal phosphate)lysine; alternate). Lys353 is subject to N6-acetyllysine; alternate. Tyr356 and Tyr366 each carry 3'-nitrotyrosine. Position 564 is a phosphoserine (Ser564).

This sequence belongs to the group II decarboxylase family. Sphingosine-1-phosphate lyase subfamily. As to quaternary structure, homodimer. Requires pyridoxal 5'-phosphate as cofactor.

It is found in the endoplasmic reticulum membrane. The catalysed reaction is sphinganine 1-phosphate = hexadecanal + phosphoethanolamine. It carries out the reaction sphing-4-enine 1-phosphate = (2E)-hexadecenal + phosphoethanolamine. Its pathway is lipid metabolism; sphingolipid metabolism. In terms of biological role, cleaves phosphorylated sphingoid bases (PSBs), such as sphingosine-1-phosphate, into fatty aldehydes and phosphoethanolamine. Elevates stress-induced ceramide production and apoptosis. Required for global lipid homeostasis in liver and cholesterol homeostasis in fibroblasts. Involved in the regulation of pro-inflammatory response and neutrophil trafficking. Modulates neuronal autophagy via phosphoethanolamine production which regulates accumulation of aggregate-prone proteins such as APP. Seems to play a role in establishing neuronal contact sites and axonal maintenance. The chain is Sphingosine-1-phosphate lyase 1 from Rattus norvegicus (Rat).